A 576-amino-acid chain; its full sequence is MRFSQTLIPTLKEEPSEAQVISHKLMLRAGLIRQLGAGIYTWLPMGLKVLRKVETIVRQEMDRAGAQEVLMPSIQPAELWEESGRWKMYGKELLRITDRHNRSFCYGPTHEEVISDLVRREIHSYKQLPANFYQIQTKFRDEVRPRFGIMRGREFLMKDAYSFDIDEAALDKSYRLMFEAYNKIFNRLDLKFRPVEADTGAIGGASSHEFHVLAQSGEDVIASCTHCQYAANLEKAFGIAVDLDGGVPEAMVRVATPGQKSIEEVAAFLKMDKARTVKCLTWHDPEADQWYLLLLRGDHTLNEVKACNATAPLAQIPAPEKAVEALGVAVGYLGAVGAEKFNKPVKILADSALRDVTNMVCGANEEGYHLTGVNWQRDLPKPEFVDLRNVEEGDGCPRCGPGSMELSRGIEVGHVFKLGYKYSEAMGVKVLDEDGKEKPLIMGCYGIGVSRIVAAAIEQNHDENGIIWPLAIAPFEVEVVVMNPNESDAMEKAEEITAQLQAGQLEVLLDDRDERAGSKFKDADLLGAPYRVLVGGRAFKEGVCEVKNRRSGVVEKIPVESVVETLLQWLAQEKKA.

It belongs to the class-II aminoacyl-tRNA synthetase family. ProS type 1 subfamily. In terms of assembly, homodimer.

It is found in the cytoplasm. The catalysed reaction is tRNA(Pro) + L-proline + ATP = L-prolyl-tRNA(Pro) + AMP + diphosphate. In terms of biological role, catalyzes the attachment of proline to tRNA(Pro) in a two-step reaction: proline is first activated by ATP to form Pro-AMP and then transferred to the acceptor end of tRNA(Pro). As ProRS can inadvertently accommodate and process non-cognate amino acids such as alanine and cysteine, to avoid such errors it has two additional distinct editing activities against alanine. One activity is designated as 'pretransfer' editing and involves the tRNA(Pro)-independent hydrolysis of activated Ala-AMP. The other activity is designated 'posttransfer' editing and involves deacylation of mischarged Ala-tRNA(Pro). The misacylated Cys-tRNA(Pro) is not edited by ProRS. The protein is Proline--tRNA ligase of Magnetococcus marinus (strain ATCC BAA-1437 / JCM 17883 / MC-1).